Reading from the N-terminus, the 387-residue chain is Exodeoxyribonuclease 7 large subunit (387 aa).

It belongs to the XseA family. As to quaternary structure, heterooligomer composed of large and small subunits.

It localises to the cytoplasm. It carries out the reaction Exonucleolytic cleavage in either 5'- to 3'- or 3'- to 5'-direction to yield nucleoside 5'-phosphates.. Bidirectionally degrades single-stranded DNA into large acid-insoluble oligonucleotides, which are then degraded further into small acid-soluble oligonucleotides. The polypeptide is Exodeoxyribonuclease 7 large subunit (Parasynechococcus marenigrum (strain WH8102)).